The sequence spans 149 residues: Flagellar basal-body protein FlbY (149 aa).

In terms of assembly, the basal body constitutes a major portion of the flagellar organelle and consists of five rings (E,L,P,S, and M) mounted on a central rod.

It localises to the bacterial flagellum basal body. This chain is Flagellar basal-body protein FlbY (flbY), found in Caulobacter vibrioides (strain ATCC 19089 / CIP 103742 / CB 15) (Caulobacter crescentus).